We begin with the raw amino-acid sequence, 90 residues long: Small ribosomal subunit protein uS15 (90 aa).

This sequence belongs to the universal ribosomal protein uS15 family. In terms of assembly, part of the 30S ribosomal subunit. Forms a bridge to the 50S subunit in the 70S ribosome, contacting the 23S rRNA.

Functionally, one of the primary rRNA binding proteins, it binds directly to 16S rRNA where it helps nucleate assembly of the platform of the 30S subunit by binding and bridging several RNA helices of the 16S rRNA. Its function is as follows. Forms an intersubunit bridge (bridge B4) with the 23S rRNA of the 50S subunit in the ribosome. In Helicobacter pylori (strain P12), this protein is Small ribosomal subunit protein uS15.